A 423-amino-acid chain; its full sequence is UPF0229 protein Pput_0430 (423 aa).

Residues 81 to 108 (EFTAGEHIPRPQGGGGGGGRGKAGNSGE) form a disordered region. Gly residues predominate over residues 92 to 107 (QGGGGGGGRGKAGNSG).

It belongs to the UPF0229 family.

The polypeptide is UPF0229 protein Pput_0430 (Pseudomonas putida (strain ATCC 700007 / DSM 6899 / JCM 31910 / BCRC 17059 / LMG 24140 / F1)).